The following is a 274-amino-acid chain: Outer surface protein A (274 aa).

The signal sequence occupies residues 1–16; it reads MKKYLLGIGLILALIA. Cysteine 17 is lipidated: N-palmitoyl cysteine. Residue cysteine 17 is the site of S-diacylglycerol cysteine attachment.

It belongs to the OspA lipoprotein family.

The protein localises to the cell outer membrane. Its subcellular location is the cell surface. The sequence is that of Outer surface protein A from Borreliella burgdorferi (Lyme disease spirochete).